A 738-amino-acid chain; its full sequence is Ribosomal RNA large subunit methyltransferase K/L (738 aa).

The region spanning 46-157 (TAYRVCLWSR…ADQAVIGLDL (112 aa)) is the THUMP domain.

It belongs to the methyltransferase superfamily. RlmKL family.

Its subcellular location is the cytoplasm. The catalysed reaction is guanosine(2445) in 23S rRNA + S-adenosyl-L-methionine = N(2)-methylguanosine(2445) in 23S rRNA + S-adenosyl-L-homocysteine + H(+). It carries out the reaction guanosine(2069) in 23S rRNA + S-adenosyl-L-methionine = N(2)-methylguanosine(2069) in 23S rRNA + S-adenosyl-L-homocysteine + H(+). Its function is as follows. Specifically methylates the guanine in position 2445 (m2G2445) and the guanine in position 2069 (m7G2069) of 23S rRNA. In Methylococcus capsulatus (strain ATCC 33009 / NCIMB 11132 / Bath), this protein is Ribosomal RNA large subunit methyltransferase K/L.